Here is a 323-residue protein sequence, read N- to C-terminus: Acetyl-coenzyme A carboxylase carboxyl transferase subunit alpha (323 aa).

One can recognise a CoA carboxyltransferase C-terminal domain in the interval 39–293 (RLSKKSQQLT…RRALADSLRQ (255 aa)).

It belongs to the AccA family. In terms of assembly, acetyl-CoA carboxylase is a heterohexamer composed of biotin carboxyl carrier protein (AccB), biotin carboxylase (AccC) and two subunits each of ACCase subunit alpha (AccA) and ACCase subunit beta (AccD).

The protein resides in the cytoplasm. The enzyme catalyses N(6)-carboxybiotinyl-L-lysyl-[protein] + acetyl-CoA = N(6)-biotinyl-L-lysyl-[protein] + malonyl-CoA. The protein operates within lipid metabolism; malonyl-CoA biosynthesis; malonyl-CoA from acetyl-CoA: step 1/1. Functionally, component of the acetyl coenzyme A carboxylase (ACC) complex. First, biotin carboxylase catalyzes the carboxylation of biotin on its carrier protein (BCCP) and then the CO(2) group is transferred by the carboxyltransferase to acetyl-CoA to form malonyl-CoA. The sequence is that of Acetyl-coenzyme A carboxylase carboxyl transferase subunit alpha from Paraburkholderia phytofirmans (strain DSM 17436 / LMG 22146 / PsJN) (Burkholderia phytofirmans).